We begin with the raw amino-acid sequence, 90 residues long: Probable Fe(2+)-trafficking protein (90 aa).

It belongs to the Fe(2+)-trafficking protein family.

Its function is as follows. Could be a mediator in iron transactions between iron acquisition and iron-requiring processes, such as synthesis and/or repair of Fe-S clusters in biosynthetic enzymes. The protein is Probable Fe(2+)-trafficking protein of Cupriavidus necator (strain ATCC 17699 / DSM 428 / KCTC 22496 / NCIMB 10442 / H16 / Stanier 337) (Ralstonia eutropha).